Here is a 442-residue protein sequence, read N- to C-terminus: Plasmalemma vesicle-associated protein (442 aa).

Over 1-27 the chain is Cytoplasmic; sequence MGLAMEHGGSYARAGGSSRGCWYYLRY. A helical; Signal-anchor for type II membrane protein membrane pass occupies residues 28–48; it reads FFLFVSLIQFLIILGLVLFMV. Topologically, residues 49-442 are extracellular; sequence YGNVHVSTES…AGIPVAPSSG (394 aa). Residues 57 to 77 adopt a coiled-coil conformation; that stretch reads ESNLQATERRAEGLYSQLLGL. N83, N89, N113, and N151 each carry an N-linked (GlcNAc...) asparagine glycan. Coiled coils occupy residues 202-225 and 280-387; these read KTRELQHQERQLAKEQLQKVQALC and SSKV…SALD. Disordered stretches follow at residues 301–328 and 394–418; these read NSDLQRQKLEAQQGLRASQEAKQKVEKE and SQPMMPVSRPMGPVPNPQPIDPASL. A compositionally biased stretch (basic and acidic residues) spans 319–328; the sequence is QEAKQKVEKE.

As to quaternary structure, homodimer. In terms of tissue distribution, expressed in lung, kidney, heart, aorta, placenta, muscle, pituitary gland, adrenals, mammary gland, bladder, lymph node, bone marrow, trachea, digestive tract, liver and tumor-associated endothelium.

The protein resides in the cell membrane. It localises to the membrane. The protein localises to the caveola. Its subcellular location is the cytoplasm. It is found in the perinuclear region. In terms of biological role, endothelial cell-specific membrane protein involved in the formation of the diaphragms that bridge endothelial fenestrae. It is also required for the formation of stomata of caveolae and transendothelial channels. Functions in microvascular permeability, endothelial fenestrae contributing to the passage of water and solutes and regulating transcellular versus paracellular flow in different organs. Plays a specific role in embryonic development. This Homo sapiens (Human) protein is Plasmalemma vesicle-associated protein (PLVAP).